The chain runs to 478 residues: UDP-N-acetylmuramate--L-alanine ligase (478 aa).

130–136 contacts ATP; sequence GTHGKTT.

It belongs to the MurCDEF family.

The protein resides in the cytoplasm. It carries out the reaction UDP-N-acetyl-alpha-D-muramate + L-alanine + ATP = UDP-N-acetyl-alpha-D-muramoyl-L-alanine + ADP + phosphate + H(+). It functions in the pathway cell wall biogenesis; peptidoglycan biosynthesis. In terms of biological role, cell wall formation. The chain is UDP-N-acetylmuramate--L-alanine ligase from Microcystis aeruginosa (strain NIES-843 / IAM M-2473).